We begin with the raw amino-acid sequence, 383 residues long: Succinate--CoA ligase [ADP-forming] subunit beta (383 aa).

The 228-residue stretch at 9 to 236 (KELLGRFGLR…VEAADPQEHR (228 aa)) folds into the ATP-grasp domain. ATP is bound by residues lysine 45, 52 to 54 (GRG), glutamate 91, alanine 94, and glutamate 99. Mg(2+) is bound by residues asparagine 191 and aspartate 205. Substrate contacts are provided by residues asparagine 256 and 313 to 315 (GIT).

The protein belongs to the succinate/malate CoA ligase beta subunit family. In terms of assembly, heterotetramer of two alpha and two beta subunits. The cofactor is Mg(2+).

It catalyses the reaction succinate + ATP + CoA = succinyl-CoA + ADP + phosphate. The enzyme catalyses GTP + succinate + CoA = succinyl-CoA + GDP + phosphate. Its pathway is carbohydrate metabolism; tricarboxylic acid cycle; succinate from succinyl-CoA (ligase route): step 1/1. Succinyl-CoA synthetase functions in the citric acid cycle (TCA), coupling the hydrolysis of succinyl-CoA to the synthesis of either ATP or GTP and thus represents the only step of substrate-level phosphorylation in the TCA. The beta subunit provides nucleotide specificity of the enzyme and binds the substrate succinate, while the binding sites for coenzyme A and phosphate are found in the alpha subunit. The protein is Succinate--CoA ligase [ADP-forming] subunit beta of Rubrobacter xylanophilus (strain DSM 9941 / JCM 11954 / NBRC 16129 / PRD-1).